The sequence spans 83 residues: uncharacterized protein (83 aa).

This is an uncharacterized protein from Thermoproteus tenax (TTV1).